We begin with the raw amino-acid sequence, 396 residues long: Elongation factor Tu (396 aa).

The region spanning 10–206 (KPHVNVGTIG…ALDTYIPTPE (197 aa)) is the tr-type G domain. Residues 19–26 (GHVDHGKT) form a G1 region. GTP is bound at residue 19 to 26 (GHVDHGKT). Threonine 26 is a Mg(2+) binding site. Positions 60-64 (GITIN) are G2. A G3 region spans residues 81–84 (DCPG). Residues 81-85 (DCPGH) and 136-139 (NKCD) contribute to the GTP site. Residues 136–139 (NKCD) are G4. The segment at 174-176 (SAK) is G5.

This sequence belongs to the TRAFAC class translation factor GTPase superfamily. Classic translation factor GTPase family. EF-Tu/EF-1A subfamily. Monomer.

The protein localises to the cytoplasm. The catalysed reaction is GTP + H2O = GDP + phosphate + H(+). Its function is as follows. GTP hydrolase that promotes the GTP-dependent binding of aminoacyl-tRNA to the A-site of ribosomes during protein biosynthesis. This is Elongation factor Tu from Cupriavidus necator (strain ATCC 17699 / DSM 428 / KCTC 22496 / NCIMB 10442 / H16 / Stanier 337) (Ralstonia eutropha).